A 280-amino-acid polypeptide reads, in one-letter code: MKVVHTIQDLRDHLRGQNRIAFVPTMGNLHEGHLALMKLARQHGDPVVTSIFVNRLQFGPNEDFDRYPRTLQNDIEKMDRDRDVYMVFAPDEREMYPEPQNYRVLPPDDLGDVLEGEFRPGFFQGVCTVVLKLLSCVQPRVAVFGKKDYQQLMIVRAMCRQFQLPVEIIAHETVRASDGLALSSRNRYLSVEERAEAPRLYALLGELRQRVLDGERDVAALEAEAAARLAAHGWRVDYVSLRRQHDLKTPGAADFETRQPLVALAAATLGATRLIDNLEI.

26–33 contributes to the ATP binding site; it reads MGNLHEGH. Histidine 33 (proton donor) is an active-site residue. Glutamine 57 is a binding site for (R)-pantoate. Glutamine 57 contacts beta-alanine. Residue 145–148 participates in ATP binding; the sequence is GKKD. A (R)-pantoate-binding site is contributed by glutamine 151. Residues valine 174 and 182 to 185 each bind ATP; that span reads LSSR.

This sequence belongs to the pantothenate synthetase family. As to quaternary structure, homodimer.

It is found in the cytoplasm. It carries out the reaction (R)-pantoate + beta-alanine + ATP = (R)-pantothenate + AMP + diphosphate + H(+). It functions in the pathway cofactor biosynthesis; (R)-pantothenate biosynthesis; (R)-pantothenate from (R)-pantoate and beta-alanine: step 1/1. Functionally, catalyzes the condensation of pantoate with beta-alanine in an ATP-dependent reaction via a pantoyl-adenylate intermediate. This is Pantothenate synthetase from Bordetella avium (strain 197N).